The primary structure comprises 343 residues: N-acetyl-gamma-glutamyl-phosphate reductase (343 aa).

C146 is a catalytic residue.

Belongs to the NAGSA dehydrogenase family. Type 1 subfamily.

It localises to the cytoplasm. It catalyses the reaction N-acetyl-L-glutamate 5-semialdehyde + phosphate + NADP(+) = N-acetyl-L-glutamyl 5-phosphate + NADPH + H(+). It functions in the pathway amino-acid biosynthesis; L-arginine biosynthesis; N(2)-acetyl-L-ornithine from L-glutamate: step 3/4. In terms of biological role, catalyzes the NADPH-dependent reduction of N-acetyl-5-glutamyl phosphate to yield N-acetyl-L-glutamate 5-semialdehyde. The polypeptide is N-acetyl-gamma-glutamyl-phosphate reductase (Arthrobacter sp. (strain FB24)).